A 216-amino-acid chain; its full sequence is Major fimbrial subunit (216 aa).

A signal peptide spans 1–20; that stretch reads MKKTLLGSLILLAFAGNVQA. A disulfide bridge connects residues Cys-41 and Cys-81.

It belongs to the fimbrial protein family.

It is found in the fimbrium. Mediates adherence to oropharyngeal epithelial cells. Helps the airway colonization process. This Haemophilus influenzae protein is Major fimbrial subunit (hifA).